Reading from the N-terminus, the 183-residue chain is MEESQQQSSKFDAPPSPYVPSRVYLAQIYWKKPAIVVLRVLQFIFSLIAFSVMADVLHDVQGSIKSLSYTVAIGVLACAYALAQLSFSLWCVIRGATSSAGVTPLYQYATFICDQMSTYFLISAASATATLIDVSGVCGSNGSGTNLCSRSTASVTFAFLAFLAFSASSVLTGYYLVKCILKA.

The Cytoplasmic segment spans residues 1 to 33 (MEESQQQSSKFDAPPSPYVPSRVYLAQIYWKKP). The chain crosses the membrane as a helical span at residues 34–54 (AIVVLRVLQFIFSLIAFSVMA). Topologically, residues 55 to 72 (DVLHDVQGSIKSLSYTVA) are extracellular. A helical membrane pass occupies residues 73–93 (IGVLACAYALAQLSFSLWCVI). The Cytoplasmic segment spans residues 94–118 (RGATSSAGVTPLYQYATFICDQMST). The chain crosses the membrane as a helical span at residues 119–139 (YFLISAASATATLIDVSGVCG). Topologically, residues 140–156 (SNGSGTNLCSRSTASVT) are extracellular. N-linked (GlcNAc...) asparagine glycosylation occurs at Asn-141. The helical transmembrane segment at 157–177 (FAFLAFLAFSASSVLTGYYLV) threads the bilayer. Residues 178 to 183 (KCILKA) lie on the Cytoplasmic side of the membrane.

This sequence belongs to the Casparian strip membrane proteins (CASP) family. Homodimer and heterodimers.

Its subcellular location is the cell membrane. The protein is CASP-like protein UU2 of Selaginella moellendorffii (Spikemoss).